A 123-amino-acid chain; its full sequence is Putative iron-sulfur cluster insertion protein ErpA (123 aa).

Iron-sulfur cluster contacts are provided by Cys51, Cys115, and Cys117.

Belongs to the HesB/IscA family. In terms of assembly, homodimer. Iron-sulfur cluster serves as cofactor.

Its function is as follows. Required for insertion of 4Fe-4S clusters. The polypeptide is Putative iron-sulfur cluster insertion protein ErpA (Burkholderia lata (strain ATCC 17760 / DSM 23089 / LMG 22485 / NCIMB 9086 / R18194 / 383)).